A 276-amino-acid chain; its full sequence is Dermonecrotic toxin Ls4SicTox-alphaIII1i (276 aa).

His-3 is an active-site residue. Mg(2+) contacts are provided by Glu-23 and Asp-25. Residue His-38 is the Nucleophile of the active site. A disulfide bond links Cys-42 and Cys-48. Residue Asp-82 coordinates Mg(2+).

The protein belongs to the arthropod phospholipase D family. Class I subfamily. It depends on Mg(2+) as a cofactor. As to expression, expressed by the venom gland.

Its subcellular location is the secreted. The enzyme catalyses an N-(acyl)-sphingosylphosphocholine = an N-(acyl)-sphingosyl-1,3-cyclic phosphate + choline. It catalyses the reaction an N-(acyl)-sphingosylphosphoethanolamine = an N-(acyl)-sphingosyl-1,3-cyclic phosphate + ethanolamine. It carries out the reaction a 1-acyl-sn-glycero-3-phosphocholine = a 1-acyl-sn-glycero-2,3-cyclic phosphate + choline. The catalysed reaction is a 1-acyl-sn-glycero-3-phosphoethanolamine = a 1-acyl-sn-glycero-2,3-cyclic phosphate + ethanolamine. Its function is as follows. Dermonecrotic toxins cleave the phosphodiester linkage between the phosphate and headgroup of certain phospholipids (sphingolipid and lysolipid substrates), forming an alcohol (often choline) and a cyclic phosphate. This toxin acts on sphingomyelin (SM). It may also act on ceramide phosphoethanolamine (CPE), lysophosphatidylcholine (LPC) and lysophosphatidylethanolamine (LPE), but not on lysophosphatidylserine (LPS), and lysophosphatidylglycerol (LPG). It acts by transphosphatidylation, releasing exclusively cyclic phosphate products as second products. Induces dermonecrosis, hemolysis, increased vascular permeability, edema, inflammatory response, and platelet aggregation. The chain is Dermonecrotic toxin Ls4SicTox-alphaIII1i from Loxosceles sp. (strain 4 GJB-2008) (Recluse spider).